The chain runs to 514 residues: Glucose-6-phosphate 1-dehydrogenase 2 (514 aa).

The NADP(+) site is built by Arg-69 and Lys-176. Residues His-206, Lys-210, Glu-244, and Asp-263 each coordinate substrate. The Proton acceptor role is filled by His-268. Lys-366 is a substrate binding site.

The protein belongs to the glucose-6-phosphate dehydrogenase family.

It carries out the reaction D-glucose 6-phosphate + NADP(+) = 6-phospho-D-glucono-1,5-lactone + NADPH + H(+). It participates in carbohydrate degradation; pentose phosphate pathway; D-ribulose 5-phosphate from D-glucose 6-phosphate (oxidative stage): step 1/3. Catalyzes the oxidation of glucose 6-phosphate to 6-phosphogluconolactone. The chain is Glucose-6-phosphate 1-dehydrogenase 2 from Mycobacterium bovis (strain ATCC BAA-935 / AF2122/97).